Reading from the N-terminus, the 509-residue chain is Histidine--tRNA ligase, cytoplasmic (509 aa).

At alanine 2 the chain carries N-acetylalanine. A WHEP-TRS domain is found at 3 to 59 (DRAALEELVRLQGAHVRGLKEQKASAEQIEEEVTKLLKLKAQLGQDEGKQKFVLKTP). Serine 66 carries the post-translational modification Phosphoserine. L-histidine-binding positions include 130–132 (DLT), arginine 157, glutamine 173, aspartate 177, arginine 326, and 330–331 (YY). Position 356 is a phosphoserine (serine 356).

It belongs to the class-II aminoacyl-tRNA synthetase family. Homodimer.

Its subcellular location is the cytoplasm. It carries out the reaction tRNA(His) + L-histidine + ATP = L-histidyl-tRNA(His) + AMP + diphosphate + H(+). Functionally, catalyzes the ATP-dependent ligation of histidine to the 3'-end of its cognate tRNA, via the formation of an aminoacyl-adenylate intermediate (His-AMP). Plays a role in axon guidance. The protein is Histidine--tRNA ligase, cytoplasmic (Hars1) of Mus musculus (Mouse).